Consider the following 1088-residue polypeptide: RNA-directed RNA polymerase (1088 aa).

The 187-residue stretch at 501–687 folds into the RdRp catalytic domain; that stretch reads LSYGDVTRFL…AKRYIAGGKI (187 aa).

Belongs to the reoviridae RNA-directed RNA polymerase family. As to quaternary structure, interacts with VP3 (Potential). Interacts with VP2; this interaction activates VP1. Interacts with NSP5; this interaction is probably necessary for the formation of functional virus factories. Interacts with NSP2; this interaction is weak. The cofactor is Mg(2+).

It is found in the virion. It catalyses the reaction RNA(n) + a ribonucleoside 5'-triphosphate = RNA(n+1) + diphosphate. Its function is as follows. RNA-directed RNA polymerase that is involved in both transcription and genome replication. Together with VP3 capping enzyme, forms an enzyme complex positioned near the channels situated at each of the five-fold vertices of the core. Following infection, the outermost layer of the virus is lost, leaving a double-layered particle (DLP) made up of the core and VP6 shell. VP1 then catalyzes the transcription of fully conservative plus-strand genomic RNAs that are extruded through the DLP's channels into the cytoplasm where they function as mRNAs for translation of viral proteins. One copy of each of the viral (+)RNAs is also recruited during core assembly, together with newly synthesized polymerase complexes and VP2. The polymerase of these novo-formed particles catalyzes the synthesis of complementary minus-strands leading to dsRNA formation. To do so, the polymerase specifically recognizes and binds 4 bases 5'-UGUG-3' in the conserved 3'-sequence of plus-strand RNA templates. VP2 presumably activates the autoinhibited VP1-RNA complex to coordinate packaging and genome replication. Once dsRNA synthesis is complete, the polymerase switches to the transcriptional mode, thus providing secondary transcription. The sequence is that of RNA-directed RNA polymerase from Rotavirus A (isolate RVA/Human/United States/WI61/1983/G9P1A[8]) (RV-A).